We begin with the raw amino-acid sequence, 460 residues long: ATP synthase subunit beta (460 aa).

An ATP-binding site is contributed by 150-157 (GGAGVGKT).

The protein belongs to the ATPase alpha/beta chains family. In terms of assembly, F-type ATPases have 2 components, CF(1) - the catalytic core - and CF(0) - the membrane proton channel. CF(1) has five subunits: alpha(3), beta(3), gamma(1), delta(1), epsilon(1). CF(0) has three main subunits: a(1), b(2) and c(9-12). The alpha and beta chains form an alternating ring which encloses part of the gamma chain. CF(1) is attached to CF(0) by a central stalk formed by the gamma and epsilon chains, while a peripheral stalk is formed by the delta and b chains.

Its subcellular location is the cell inner membrane. It carries out the reaction ATP + H2O + 4 H(+)(in) = ADP + phosphate + 5 H(+)(out). In terms of biological role, produces ATP from ADP in the presence of a proton gradient across the membrane. The catalytic sites are hosted primarily by the beta subunits. The protein is ATP synthase subunit beta of Serratia proteamaculans (strain 568).